Consider the following 208-residue polypeptide: ATP phosphoribosyltransferase (208 aa).

The protein belongs to the ATP phosphoribosyltransferase family. Short subfamily. As to quaternary structure, heteromultimer composed of HisG and HisZ subunits.

The protein localises to the cytoplasm. The catalysed reaction is 1-(5-phospho-beta-D-ribosyl)-ATP + diphosphate = 5-phospho-alpha-D-ribose 1-diphosphate + ATP. It participates in amino-acid biosynthesis; L-histidine biosynthesis; L-histidine from 5-phospho-alpha-D-ribose 1-diphosphate: step 1/9. In terms of biological role, catalyzes the condensation of ATP and 5-phosphoribose 1-diphosphate to form N'-(5'-phosphoribosyl)-ATP (PR-ATP). Has a crucial role in the pathway because the rate of histidine biosynthesis seems to be controlled primarily by regulation of HisG enzymatic activity. This is ATP phosphoribosyltransferase (hisG) from Thermotoga maritima (strain ATCC 43589 / DSM 3109 / JCM 10099 / NBRC 100826 / MSB8).